A 272-amino-acid chain; its full sequence is Shikimate dehydrogenase (NADP(+)) (272 aa).

Residues 14–16 (SKS) and threonine 61 each bind shikimate. Lysine 65 functions as the Proton acceptor in the catalytic mechanism. Glutamate 77 contributes to the NADP(+) binding site. Shikimate contacts are provided by asparagine 86 and aspartate 102. Residues 126 to 130 (GAGGA), 149 to 154 (NRTASR), and methionine 213 each bind NADP(+). Tyrosine 215 lines the shikimate pocket. Glycine 237 is an NADP(+) binding site.

The protein belongs to the shikimate dehydrogenase family. As to quaternary structure, homodimer.

The catalysed reaction is shikimate + NADP(+) = 3-dehydroshikimate + NADPH + H(+). It functions in the pathway metabolic intermediate biosynthesis; chorismate biosynthesis; chorismate from D-erythrose 4-phosphate and phosphoenolpyruvate: step 4/7. In terms of biological role, involved in the biosynthesis of the chorismate, which leads to the biosynthesis of aromatic amino acids. Catalyzes the reversible NADPH linked reduction of 3-dehydroshikimate (DHSA) to yield shikimate (SA). The sequence is that of Shikimate dehydrogenase (NADP(+)) from Citrobacter koseri (strain ATCC BAA-895 / CDC 4225-83 / SGSC4696).